Here is a 349-residue protein sequence, read N- to C-terminus: Heat-inducible transcription repressor HrcA (349 aa).

The protein belongs to the HrcA family.

In terms of biological role, negative regulator of class I heat shock genes (grpE-dnaK-dnaJ and groELS operons). Prevents heat-shock induction of these operons. This Xylella fastidiosa (strain 9a5c) protein is Heat-inducible transcription repressor HrcA.